Here is a 113-residue protein sequence, read N- to C-terminus: Large ribosomal subunit protein bL17 (113 aa).

Belongs to the bacterial ribosomal protein bL17 family. In terms of assembly, part of the 50S ribosomal subunit. Contacts protein L32.

The protein is Large ribosomal subunit protein bL17 of Natranaerobius thermophilus (strain ATCC BAA-1301 / DSM 18059 / JW/NM-WN-LF).